Consider the following 80-residue polypeptide: Acyl carrier protein (80 aa).

The Carrier domain occupies 4-79 (EAILEKVRSI…DAVKYIEDKQ (76 aa)). Serine 39 bears the O-(pantetheine 4'-phosphoryl)serine mark.

The protein belongs to the acyl carrier protein (ACP) family. 4'-phosphopantetheine is transferred from CoA to a specific serine of apo-ACP by AcpS. This modification is essential for activity because fatty acids are bound in thioester linkage to the sulfhydryl of the prosthetic group.

It localises to the cytoplasm. It functions in the pathway lipid metabolism; fatty acid biosynthesis. Functionally, carrier of the growing fatty acid chain in fatty acid biosynthesis. The polypeptide is Acyl carrier protein (Prochlorococcus marinus (strain MIT 9313)).